We begin with the raw amino-acid sequence, 450 residues long: WD repeat-containing protein ATCSA-1 (450 aa).

WD repeat units lie at residues 41 to 81 (PHRG…DYEA), 101 to 141 (GHKY…AVVD), 148 to 185 (VYRT…FSHT), and 188 to 228 (GHRD…CFRV). Residues 269 to 298 (LQSKQTGSQSVKGSSSAKASVEKSRQKRIH) are disordered. The span at 271–287 (SKQTGSQSVKGSSSAKA) shows a compositional bias: low complexity. WD repeat units lie at residues 310–349 (AHYG…NTLV) and 397–436 (GHYE…EDEM).

In terms of assembly, interacts with DDB1A. In terms of tissue distribution, expressed in roots, leaves, stems, flowers and siliques.

The protein localises to the nucleus. Involved in UV-B tolerance and genome integrity. In association with DDB2, is necessary for repair of UV-B-induced DNA lesions. The chain is WD repeat-containing protein ATCSA-1 from Arabidopsis thaliana (Mouse-ear cress).